A 177-amino-acid chain; its full sequence is Disulfide bond formation protein B (177 aa).

Over 1–14 (MMVWNWIDRTPRRV) the chain is Cytoplasmic. Residues 15 to 31 (LALISLACVALLACGLY) traverse the membrane as a helical segment. At 32–49 (LQHVVGLVPCPMCIVQRY) the chain is on the periplasmic side. A disulfide bond links Cys41 and Cys44. A helical transmembrane segment spans residues 50–64 (ALIGLALLTGLASAR). The Cytoplasmic portion of the chain corresponds to 65–70 (SAKGWW). Residues 71 to 89 (LTLSALAALTAGFGATVAA) form a helical membrane-spanning segment. The Periplasmic segment spans residues 90 to 145 (RQSWLQWYPPQSVSCGRDFYGMIESFPLSRAIPMILRGSGDCAAVDWSLLGGSIAN). A disulfide bridge connects residues Cys104 and Cys131. A helical membrane pass occupies residues 146–164 (WSFLCFALLGLLLLALLAR). At 165–177 (GVRGARQRAPAPV) the chain is on the cytoplasmic side.

Belongs to the DsbB family.

The protein localises to the cell inner membrane. Required for disulfide bond formation in some periplasmic proteins. Acts by oxidizing the DsbA protein. In Verminephrobacter eiseniae (strain EF01-2), this protein is Disulfide bond formation protein B.